We begin with the raw amino-acid sequence, 147 residues long: Lysozyme C-1 (147 aa).

The first 18 residues, 1 to 18 (MKALIILGFLFLSVAVQG), serve as a signal peptide directing secretion. Residues 19 to 147 (KVFERCELAR…VSSYVEGCTL (129 aa)) form the C-type lysozyme domain. Cystine bridges form between C24-C145, C48-C133, C83-C99, and C95-C113. Active-site residues include E53 and D71.

Belongs to the glycosyl hydrolase 22 family. Monomer. In terms of tissue distribution, stomach-specific.

It carries out the reaction Hydrolysis of (1-&gt;4)-beta-linkages between N-acetylmuramic acid and N-acetyl-D-glucosamine residues in a peptidoglycan and between N-acetyl-D-glucosamine residues in chitodextrins.. In terms of biological role, lysozymes have primarily a bacteriolytic function; those in tissues and body fluids are associated with the monocyte-macrophage system and enhance the activity of immunoagents. In Bos taurus (Bovine), this protein is Lysozyme C-1 (LYZ1).